The sequence spans 37 residues: Large ribosomal subunit protein bL36 (37 aa).

It belongs to the bacterial ribosomal protein bL36 family.

In Vibrio atlanticus (strain LGP32) (Vibrio splendidus (strain Mel32)), this protein is Large ribosomal subunit protein bL36.